The chain runs to 124 residues: IIFSMWLLFSFSESTEYIAGDSESSWKVNFPSREALIDWATRHQFTYSDTVVNEDEDHDCNTKIHSKLGDMVVTKRPLVLPPLITLPLSPSPAPAPNTSGAAAGCGFMAFLEVSVAMLMFLIWL.

The N-terminal stretch at 1–12 (IIFSMWLLFSFS) is a signal peptide.

In terms of biological role, involved in the infection process during the plant-rhizobium interaction. The protein is Early nodulin-5 (ENOD5) of Vicia sativa (Spring vetch).